Consider the following 236-residue polypeptide: 2,3,4,5-tetrahydropyridine-2,6-dicarboxylate N-acetyltransferase (236 aa).

Belongs to the transferase hexapeptide repeat family. DapH subfamily.

The enzyme catalyses (S)-2,3,4,5-tetrahydrodipicolinate + acetyl-CoA + H2O = L-2-acetamido-6-oxoheptanedioate + CoA. It functions in the pathway amino-acid biosynthesis; L-lysine biosynthesis via DAP pathway; LL-2,6-diaminopimelate from (S)-tetrahydrodipicolinate (acetylase route): step 1/3. Its function is as follows. Catalyzes the transfer of an acetyl group from acetyl-CoA to tetrahydrodipicolinate. This is 2,3,4,5-tetrahydropyridine-2,6-dicarboxylate N-acetyltransferase from Clostridium beijerinckii (strain ATCC 51743 / NCIMB 8052) (Clostridium acetobutylicum).